A 314-amino-acid polypeptide reads, in one-letter code: Methionyl-tRNA formyltransferase (314 aa).

A (6S)-5,6,7,8-tetrahydrofolate-binding site is contributed by 110–113 (SLLP).

It belongs to the Fmt family.

It catalyses the reaction L-methionyl-tRNA(fMet) + (6R)-10-formyltetrahydrofolate = N-formyl-L-methionyl-tRNA(fMet) + (6S)-5,6,7,8-tetrahydrofolate + H(+). Its function is as follows. Attaches a formyl group to the free amino group of methionyl-tRNA(fMet). The formyl group appears to play a dual role in the initiator identity of N-formylmethionyl-tRNA by promoting its recognition by IF2 and preventing the misappropriation of this tRNA by the elongation apparatus. This chain is Methionyl-tRNA formyltransferase, found in Bacillus cereus (strain AH187).